The sequence spans 236 residues: Lipoprotein NlpE (236 aa).

The signal sequence occupies residues 1-20 (MVKKAIVTAMAVISLFTLMG). Residue Cys-21 is the site of N-palmitoyl cysteine attachment. Cys-21 carries S-diacylglycerol cysteine lipidation. The N-terminal domain stretch occupies residues 21–100 (CNNRAEVDTL…WARTADKLVL (80 aa)). At 21-236 (CNNRAEVDTL…PNQDCSSLGQ (216 aa)) the chain is on the periplasmic side. A CXXC motif is present at residues 51 to 54 (CADC). Positions 126–236 (PIESQFNYTL…PNQDCSSLGQ (111 aa)) are C-terminal domain. The tract at residues 144-156 (MTPMTLRGMYFYM) is could contain a copper-binding motif. Residues Cys-165 and Cys-231 are joined by a disulfide bond.

Probably exists as a monomer in vivo, can however form homodimers which swap domains. Palmitoylated. Post-translationally, seems to only form a disulfide bond between Cys-165 and Cys-231. The 2 other cysteine residues may however be chemically active.

It localises to the cell outer membrane. In terms of biological role, involved in copper homeostasis, could be involved in both copper efflux and the delivery of copper to copper-dependent enzymes. Required for efficient binding of stationary phase cells to hydrophobic surfaces, part of the process of biofilm formation. Functions during envelope stress responses; when overproduced induces degP through the activation of the two-component envelope stress response system CpxA/CpxR. DegP induction seems to require membrane anchoring of this protein. Structural changes and/or interaction of the CXXC motif with its environment may lead to activation of the Cpx stress response. The chain is Lipoprotein NlpE from Escherichia coli (strain K12).